Here is a 542-residue protein sequence, read N- to C-terminus: Protein MGF 505-11L (542 aa).

The protein belongs to the asfivirus MGF 505 family.

Its function is as follows. Plays a role in virus cell tropism, and may be required for efficient virus replication in macrophages. The chain is Protein MGF 505-11L from African swine fever virus (isolate Pig/Kenya/KEN-50/1950) (ASFV).